Consider the following 238-residue polypeptide: Probable transcriptional regulatory protein CF0838 (238 aa).

The protein belongs to the TACO1 family.

It is found in the cytoplasm. This is Probable transcriptional regulatory protein CF0838 from Chlamydia felis (strain Fe/C-56) (Chlamydophila felis).